We begin with the raw amino-acid sequence, 629 residues long: MLMEIRESVKERIEEIIKEIAPQWEGEIELKETPDPKLGDFGTPIAFKLAKLLKRPPIEIAEKIVEKLKLNLPEGIKDVKAVNGYINVFIDYPHFARILINDILAKGDRFGSSEIGKGKKVIVEHTSVNPTKPLHMGHARNAILGDVMARILRFLGYEVEVQNYIDDLGIQFAQVYWGYLRLKEEFERIMNELRERGLKDNPIDHALGLLYVEVNRRLEDNPELENEIRDIMKKLESGELYGRKLAEEVVRAQMVTTYKLGVKYDLLVWESDIVRRKLFEIALELLSKNENFYIPSDGKYRGAFVMDLRKLFPDMKNPILVLRRSDGTATYTGKDIAYHLWKFGKIDVDLLYKEWDSTTWTTAPDGKSMPNKFGNANIVINVIGAEQKHPQLAIKYALQLLGFEDAAANLYHLAYEHVERPEGKFSGRKGTWVGFTVDEVIQEAVKRARELIEEKNPALSDEEKAEVAEKVGIGAIRYNLIKYSPDKKIIFRWEDVLNFEGESAPYIQYAHARCSSILRKAEEEGIKVDPETLFKNADFTKLSERERELVIMLSKFPRIVEQAGKDVKPHLIAWFANELASLFNKFYMDHPVLKAEEGVREARLLLVMAVEQVLKNALYLMGIEAPERM.

The 'HIGH' region signature appears at valine 128 to histidine 138.

It belongs to the class-I aminoacyl-tRNA synthetase family.

The protein localises to the cytoplasm. The catalysed reaction is tRNA(Arg) + L-arginine + ATP = L-arginyl-tRNA(Arg) + AMP + diphosphate. The polypeptide is Arginine--tRNA ligase (argS) (Pyrococcus horikoshii (strain ATCC 700860 / DSM 12428 / JCM 9974 / NBRC 100139 / OT-3)).